Here is a 475-residue protein sequence, read N- to C-terminus: Trifunctional enzyme subunit beta, mitochondrial (475 aa).

Residues Met-1–His-34 constitute a mitochondrion transit peptide. The residue at position 53 (Lys-53) is an N6-succinyllysine. Position 73 is an N6-acetyllysine; alternate (Lys-73). Residue Lys-73 is modified to N6-succinyllysine; alternate. Residue Cys-139 is the Acyl-thioester intermediate of the active site. Residues Ile-174–Asn-221 lie within the membrane without spanning it. An N6-acetyllysine; alternate modification is found at Lys-189. Lys-189 is modified (N6-succinyllysine; alternate). Lys-191, Lys-273, and Lys-292 each carry N6-succinyllysine. Lys-294 carries the post-translational modification N6-acetyllysine; alternate. Lys-294 carries the post-translational modification N6-succinyllysine; alternate. Lys-299 carries the N6-acetyllysine modification. Lys-333 is modified (N6-acetyllysine; alternate). Lys-333 is subject to N6-succinyllysine; alternate. 2 positions are modified to N6-acetyllysine: Lys-349 and Lys-362. Cys-459 acts as the Proton donor/acceptor in catalysis.

Belongs to the thiolase-like superfamily. Thiolase family. In terms of assembly, heterotetramer of 2 alpha/HADHA and 2 beta/HADHB subunits; forms the mitochondrial trifunctional enzyme. Also purified as higher order heterooligomers including a 4 alpha/HADHA and 4 beta/HADHB heterooligomer which physiological significance remains unclear. The mitochondrial trifunctional enzyme interacts with MTLN. Interacts with RSAD2/viperin. Post-translationally, acetylation of Lys-202 is observed in liver mitochondria from fasted mice but not from fed mice.

The protein localises to the mitochondrion. The protein resides in the mitochondrion inner membrane. It localises to the mitochondrion outer membrane. It is found in the endoplasmic reticulum. The catalysed reaction is an acyl-CoA + acetyl-CoA = a 3-oxoacyl-CoA + CoA. It carries out the reaction butanoyl-CoA + acetyl-CoA = 3-oxohexanoyl-CoA + CoA. It catalyses the reaction hexanoyl-CoA + acetyl-CoA = 3-oxooctanoyl-CoA + CoA. The enzyme catalyses octanoyl-CoA + acetyl-CoA = 3-oxodecanoyl-CoA + CoA. The catalysed reaction is decanoyl-CoA + acetyl-CoA = 3-oxododecanoyl-CoA + CoA. It carries out the reaction dodecanoyl-CoA + acetyl-CoA = 3-oxotetradecanoyl-CoA + CoA. It catalyses the reaction tetradecanoyl-CoA + acetyl-CoA = 3-oxohexadecanoyl-CoA + CoA. It participates in lipid metabolism; fatty acid beta-oxidation. Its function is as follows. Mitochondrial trifunctional enzyme catalyzes the last three of the four reactions of the mitochondrial beta-oxidation pathway. The mitochondrial beta-oxidation pathway is the major energy-producing process in tissues and is performed through four consecutive reactions breaking down fatty acids into acetyl-CoA. Among the enzymes involved in this pathway, the trifunctional enzyme exhibits specificity for long-chain fatty acids. Mitochondrial trifunctional enzyme is a heterotetrameric complex composed of two proteins, the trifunctional enzyme subunit alpha/HADHA carries the 2,3-enoyl-CoA hydratase and the 3-hydroxyacyl-CoA dehydrogenase activities, while the trifunctional enzyme subunit beta/HADHB described here bears the 3-ketoacyl-CoA thiolase activity. This Mus musculus (Mouse) protein is Trifunctional enzyme subunit beta, mitochondrial (Hadhb).